A 34-amino-acid polypeptide reads, in one-letter code: Trypsin inhibitor (34 aa).

Cystine bridges form between Cys-7–Cys-29 and Cys-11–Cys-25.

It is found in the secreted. Its function is as follows. Inhibits trypsin. This is Trypsin inhibitor from Veronica hederifolia (Ivy-leaved speedwell).